The following is a 448-amino-acid chain: Probable D-serine dehydratase (448 aa).

Lys-119 carries the N6-(pyridoxal phosphate)lysine modification.

Belongs to the serine/threonine dehydratase family. DsdA subfamily. Pyridoxal 5'-phosphate serves as cofactor.

The catalysed reaction is D-serine = pyruvate + NH4(+). In Chromobacterium violaceum (strain ATCC 12472 / DSM 30191 / JCM 1249 / CCUG 213 / NBRC 12614 / NCIMB 9131 / NCTC 9757 / MK), this protein is Probable D-serine dehydratase.